A 270-amino-acid polypeptide reads, in one-letter code: Bacterial microcompartment shell protein PduB (270 aa).

The tract at residues 6-18 (LVEQIMAQVIARV) is probable helix that binds cargo to the BMC shell. BMC circularly permuted domains are found at residues 47–152 (EFVG…DRTF) and 154–258 (DVYG…LATL).

Belongs to the EutL/PduB family. In terms of assembly, homotrimerizes to form a pseudohexamer with a central pore. The trimers pack into an array. In purified BMCs seen as a 28.0 kDa and 25.0 kDa form, both of which have been N-terminally sequenced and whose N-fMet is removed; the smaller form is called PduB'.

Its subcellular location is the bacterial microcompartment. The protein operates within polyol metabolism; 1,2-propanediol degradation. In terms of biological role, the two proteins produced are among the major shell proteins of the bacterial microcompartment (BMC) dedicated to 1,2-propanediol (1,2-PD) degradation. Required for structural integrity of BMCs and to mitigate propionaldehyde toxicity. The N-terminal 13 residues are important for correct assembly of the BMC shell. The isolated BMC shell component protein ratio for J:A:B':B:K:T:U is approximately 15:10:7:6:1:1:2. The N-terminus of the long form (PduB) is required for correct formation of BMCs, deletions in the first 37 residues have substantially reduced levels of the major lumen enzymes. May play a major role in binding the enzyme contents to the shell. Functionally, the 1,2-PD-specific bacterial microcompartment (BMC) concentrates low levels of 1,2-PD catabolic enzymes, concentrates volatile reaction intermediates thus enhancing pathway flux and keeps the level of toxic, mutagenic propionaldehyde low. The protein is Bacterial microcompartment shell protein PduB of Salmonella typhimurium (strain LT2 / SGSC1412 / ATCC 700720).